Reading from the N-terminus, the 396-residue chain is Putative cystathionine beta-lyase (396 aa).

K210 is subject to N6-(pyridoxal phosphate)lysine.

The protein belongs to the trans-sulfuration enzymes family. Requires pyridoxal 5'-phosphate as cofactor.

The catalysed reaction is L,L-cystathionine + H2O = L-homocysteine + pyruvate + NH4(+). The enzyme catalyses an S-substituted L-cysteine + H2O = a thiol + pyruvate + NH4(+). Its pathway is amino-acid biosynthesis; L-methionine biosynthesis via de novo pathway; L-homocysteine from L-cystathionine: step 1/1. In terms of biological role, catalyzes the cleavage of cystathionine to homocysteine, pyruvate and ammonia during methionine biosynthesis. This is Putative cystathionine beta-lyase (metC) from Rhizobium johnstonii (strain DSM 114642 / LMG 32736 / 3841) (Rhizobium leguminosarum bv. viciae).